The following is a 302-amino-acid chain: Probable WRKY transcription factor 40 (302 aa).

The WRKY DNA-binding region spans 140–206 (DTTLVVKDGY…YEGEHNHPMP (67 aa)).

It belongs to the WRKY group III family.

It is found in the nucleus. Functionally, transcription factor. Interacts specifically with the W box (5'-(T)TGAC[CT]-3'), a frequently occurring elicitor-responsive cis-acting element. The sequence is that of Probable WRKY transcription factor 40 from Arabidopsis thaliana (Mouse-ear cress).